The following is a 529-amino-acid chain: BAR/IMD domain-containing adapter protein 2-like 2 (529 aa).

The region spanning 1-239 (MAPEMDQFYR…HSPGLLGPVL (239 aa)) is the IMD domain. Disordered stretches follow at residues 221–332 (EASR…GGAR) and 399–529 (NPLN…PLIR). Phosphoserine occurs at positions 231, 272, and 304. Residues 301 to 317 (SASSLYSSSTQRSRSNS) show a composition bias toward low complexity. Over residues 321–331 (RPGGGGGGGGA) the composition is skewed to gly residues. Residues 329–392 (GGARRVRALV…PEAYVKPLDE (64 aa)) enclose the SH3 domain. Residues 439–459 (GNSTASSDYWDGQSRSRTPSH) are compositionally biased toward polar residues. The span at 473–484 (PSSRRSSMGSMG) shows a compositional bias: low complexity. Phosphoserine occurs at positions 479 and 482.

It is found in the cell membrane. The protein localises to the cell junction. It localises to the cytoplasmic vesicle membrane. Its function is as follows. Phosphoinositides-binding protein that induces the formation of planar or gently curved membrane structures. Binds to phosphoinositides, including to phosphatidylinositol 4,5-bisphosphate (PtdIns(4,5)P2) headgroups. There seems to be no clear preference for a specific phosphoinositide. The sequence is that of BAR/IMD domain-containing adapter protein 2-like 2 (BAIAP2L2) from Bos taurus (Bovine).